The chain runs to 1256 residues: MGAKEATVRGPGASPVHRTCHLIPLLLAGMLTTGLAQSPVPTSAPRGFWALSENLTVVEGSTVKLWCGVRAPGSVVQWAKDGLLLGPNPKIPGFPRYSLEGDSAKGEFHLLIEACDLSDDAEYECQVGRSELGPELVSPSVILSILVSPKVLQLTPEAGSTVTWVAGQEYVVTCVSGDAKPAPDIIFIQGGRTVEDVSSSVNEGSEEKLFFTEAEARVTPQSSDNGQLLVCEGSNPALATPIKASFTMNILFPPGPPVIDWPGLNEGHVRAGENLELPCIARGGNPPATLQWLKNGKPVSIAWGTEHAQAVAHSVLVMTVRPEDHGARLSCQSYNSVSAETQERSITLQVTFPPSAVTILGSTSQSENKNVTLCCLTKSSRPRVLLRWWLGGRQLLPTDETVMDGLHGGHISMSNLTLLVKREDNGLSLTCEAFSDAFSKETFKKSLTLNVKYPAQKLWIEGPPEGQSIRTGTRVRLVCLAIGGNPEPSLTWLKDSRPVNDPRQSQEPRRVQLGSVEKSGSTFSRELVLIIGPPDNLAKFSCKAGQLSASTQLVVQFPPTNLTILANSSALRPGDALNLTCVSISSNPPVNLSLDKEGERLDDVAAKPQSAPFKGSAASRSVFLRVSSRDHGHRVTCRAHSEALRETVSSFYRLNVLYPPEFLGEQVRAVTVVEQGQALLPVSVSANPAPEAFNWTFRGYRLSPAGGPRHRILSGGALQLWNVTRADDGFYQLHCQNSEGTAEALLKLDVHYAPTIRALKDPTEVNVGGSVDIVCTVDANPILPEMFSWERLGEDEEELNLDDMEKMSKGSTGRLRIRQAKLSQAGAYQCIVDNGVAPAARGLVRLVVRFAPQVDHPTPLTKVAAAGDSTSSATLHCRARGVPNIDFTWTKNGVPLDLQDPRYTEHKYHQGVVHSSLLTIANVSAAQDYALFKCTATNALGSDHTNIQLVSISRPDPPLGLKVVSVSPHSVGLEWKPGFDGGLPQRFQIRYEALESPGFLYMDVLPAQATTFTLTGLKPSTRYRIWLLASNALGDSGLTDKGIQVSITTPGLDQAPEDTDQPLPTEQPPGPPRLPLLPVLFAVGGLLLLSNASCVGGLLWRRRLRRLAEEISEKTEAGSEEDRIRNEYEESQWTGDRDTRSSTVSTAEVDPHYYSMRDFSPQLPPTLEEVSYRQAFTGIEDEDMAFPGHLYDEVERVYGPPGVWGPLYDEVQMDPYDLRWPEVKYEDPRGIYDQVAADMDAGEPGSLPFELRGHLV.

Positions 1-35 (MGAKEATVRGPGASPVHRTCHLIPLLLAGMLTTGL) are cleaved as a signal peptide. Residues 36 to 1078 (AQSPVPTSAP…PGPPRLPLLP (1043 aa)) are Extracellular-facing. Ig-like C2-type domains are found at residues 39-144 (PVPT…VILS), 149-247 (PKVL…ASFT), 256-347 (PPVI…RSIT), 354-448 (PSAV…KSLT), 454-554 (PAQK…TQLV), and 558-649 (PPTN…ETVS). Asn-54 is a glycosylation site (N-linked (GlcNAc...) asparagine). Disulfide bonds link Cys-67-Cys-125, Cys-174-Cys-231, and Cys-279-Cys-331. 2 N-linked (GlcNAc...) asparagine glycosylation sites follow: Asn-370 and Asn-415. Cys-375 and Cys-431 are disulfide-bonded. Phosphoserine is present on Ser-446. A disulfide bridge links Cys-479 with Cys-542. Residues 491–516 (TWLKDSRPVNDPRQSQEPRRVQLGSV) are disordered. Positions 494–510 (KDSRPVNDPRQSQEPRR) are enriched in basic and acidic residues. Asn-561, Asn-578, Asn-591, and Asn-722 each carry an N-linked (GlcNAc...) asparagine glycan. An intrachain disulfide couples Cys-581 to Cys-637. Ig-like C2-type domains follow at residues 754-846 (PTIR…LVRL) and 852-953 (PQVD…VSIS). 2 cysteine pairs are disulfide-bonded: Cys-775-Cys-830 and Cys-877-Cys-934. Residues 957 to 1051 (PPLGLKVVSV…GIQVSITTPG (95 aa)) enclose the Fibronectin type-III domain. Positions 1048–1071 (TTPGLDQAPEDTDQPLPTEQPPGP) are disordered. A helical membrane pass occupies residues 1079–1099 (VLFAVGGLLLLSNASCVGGLL). At 1100–1256 (WRRRLRRLAE…LPFELRGHLV (157 aa)) the chain is on the cytoplasmic side. Position 1112 is a phosphoserine (Ser-1112). The span at 1112–1128 (SEKTEAGSEEDRIRNEY) shows a compositional bias: basic and acidic residues. Positions 1112-1143 (SEKTEAGSEEDRIRNEYEESQWTGDRDTRSST) are disordered. Residue Thr-1115 is modified to Phosphothreonine. Ser-1119 is subject to Phosphoserine. Tyr-1208 bears the Phosphotyrosine; by FYN mark.

The protein belongs to the immunoglobulin superfamily. Interacts with NPHS2 and with CD2AP (via C-terminal domain). Interacts with MAGI1 (via PDZ 2 and 3 domains) forming a tripartite complex with IGSF5/JAM4. Forms a complex with ACTN4, CASK, IQGAP1, MAGI2, SPTAN1 and SPTBN1. Interacts with DDN; the interaction is direct. Self-associates (via the Ig-like domains). Also interacts (via the Ig-like domains) with KIRREL1 and KIRREL2; the interaction with KIRREL1 is dependent on KIRREL1 glycosylation. Interacts with KIRREL3. Interacts with phosphatidylinositol 3-kinase regulatory subunit PIK3R1; the interaction is reduced by high glucose levels. In terms of processing, phosphorylated at Tyr-1208 by FYN, leading to the recruitment and activation of phospholipase C-gamma-1/PLCG1. Tyrosine phosphorylation is reduced by high glucose levels. Dephosphorylated by tensin TNS2 which leads to reduced binding of NPHN1 to PIK3R1. In terms of tissue distribution, expressed in kidney glomeruli. In the embryo, expressed in the mesonephric kidney at 11 dpc with strong expression in cranial tubules with podocyte-like structures. Expression is observed in the podocytes of the developing kidney from 13 dpc. High expression is also detected in the developing cerebellum, hindbrain, spinal cord, retina and hypothalamus. Expressed in skeletal muscle during myoblast fusion such as in the adult following acute injury and in the embryo but not detected in uninjured adult skeletal muscle. Isoform 1 and isoform 2 are expressed in the newborn brain and developing cerebellum. Isoform 1 is the predominant isoform in adult kidney.

The protein resides in the cell membrane. Seems to play a role in the development or function of the kidney glomerular filtration barrier. Regulates glomerular vascular permeability. May anchor the podocyte slit diaphragm to the actin cytoskeleton. Plays a role in skeletal muscle formation through regulation of myoblast fusion. This chain is Nephrin (Nphs1), found in Mus musculus (Mouse).